The following is a 118-amino-acid chain: Small ribosomal subunit protein uS13 (118 aa).

The disordered stretch occupies residues 94–118 (SLPVRGQRTKTNARTRKGPRKPIKK).

It belongs to the universal ribosomal protein uS13 family. Part of the 30S ribosomal subunit. Forms a loose heterodimer with protein S19. Forms two bridges to the 50S subunit in the 70S ribosome.

In terms of biological role, located at the top of the head of the 30S subunit, it contacts several helices of the 16S rRNA. In the 70S ribosome it contacts the 23S rRNA (bridge B1a) and protein L5 of the 50S subunit (bridge B1b), connecting the 2 subunits; these bridges are implicated in subunit movement. Contacts the tRNAs in the A and P-sites. This Haemophilus influenzae (strain 86-028NP) protein is Small ribosomal subunit protein uS13.